The chain runs to 600 residues: Isocitrate dehydrogenase kinase/phosphatase (600 aa).

Residues 335–341 (APGIRGM) and K356 contribute to the ATP site. D390 is an active-site residue.

It belongs to the AceK family.

It is found in the cytoplasm. The enzyme catalyses L-seryl-[isocitrate dehydrogenase] + ATP = O-phospho-L-seryl-[isocitrate dehydrogenase] + ADP + H(+). In terms of biological role, bifunctional enzyme which can phosphorylate or dephosphorylate isocitrate dehydrogenase (IDH) on a specific serine residue. This is a regulatory mechanism which enables bacteria to bypass the Krebs cycle via the glyoxylate shunt in response to the source of carbon. When bacteria are grown on glucose, IDH is fully active and unphosphorylated, but when grown on acetate or ethanol, the activity of IDH declines drastically concomitant with its phosphorylation. The sequence is that of Isocitrate dehydrogenase kinase/phosphatase from Bordetella parapertussis (strain 12822 / ATCC BAA-587 / NCTC 13253).